A 123-amino-acid chain; its full sequence is Maintenance of telomere capping protein 3, mitochondrial (123 aa).

A mitochondrion-targeting transit peptide spans 1–37; sequence MMGRNGIRLALKRSFSTYQPPVVEITNITKLWPTLRP.

It is found in the mitochondrion. Functionally, may be involved in telomere capping. This chain is Maintenance of telomere capping protein 3, mitochondrial (MTC3), found in Saccharomyces cerevisiae (strain ATCC 204508 / S288c) (Baker's yeast).